The following is a 64-amino-acid chain: Large ribosomal subunit protein bL35 (64 aa).

Belongs to the bacterial ribosomal protein bL35 family.

In Chlorobium chlorochromatii (strain CaD3), this protein is Large ribosomal subunit protein bL35.